Consider the following 369-residue polypeptide: DNA replication and repair protein RecF (369 aa).

30–37 (GQNAQGKT) provides a ligand contact to ATP.

It belongs to the RecF family.

It is found in the cytoplasm. Its function is as follows. The RecF protein is involved in DNA metabolism; it is required for DNA replication and normal SOS inducibility. RecF binds preferentially to single-stranded, linear DNA. It also seems to bind ATP. This is DNA replication and repair protein RecF from Acetivibrio thermocellus (strain ATCC 27405 / DSM 1237 / JCM 9322 / NBRC 103400 / NCIMB 10682 / NRRL B-4536 / VPI 7372) (Clostridium thermocellum).